A 228-amino-acid chain; its full sequence is Dehydrin Rab25 (228 aa).

2 disordered regions span residues 1-68 (MAEH…EAPH) and 115-228 (AGVT…HGHH). 2 stretches are compositionally biased toward basic and acidic residues: residues 169-187 (KEKIKEKLPGSHKQEEQKQ) and 212-228 (KGIVEKIKEKLPGHGHH).

This sequence belongs to the plant dehydrin family.

This chain is Dehydrin Rab25 (RAB25), found in Oryza sativa subsp. japonica (Rice).